The following is a 284-amino-acid chain: D-tagatose-1,6-bisphosphate aldolase subunit GatY (284 aa).

D82 serves as the catalytic Proton donor. Residues H83 and H180 each coordinate Zn(2+). G181 serves as a coordination point for dihydroxyacetone phosphate. H208 contributes to the Zn(2+) binding site. Dihydroxyacetone phosphate contacts are provided by residues 209 to 211 (GAS) and 230 to 233 (NVAT).

This sequence belongs to the class II fructose-bisphosphate aldolase family. TagBP aldolase GatY subfamily. In terms of assembly, forms a complex with GatZ. The cofactor is Zn(2+).

The catalysed reaction is D-tagatofuranose 1,6-bisphosphate = D-glyceraldehyde 3-phosphate + dihydroxyacetone phosphate. The protein operates within carbohydrate metabolism; D-tagatose 6-phosphate degradation; D-glyceraldehyde 3-phosphate and glycerone phosphate from D-tagatose 6-phosphate: step 2/2. Functionally, catalytic subunit of the tagatose-1,6-bisphosphate aldolase GatYZ, which catalyzes the reversible aldol condensation of dihydroxyacetone phosphate (DHAP or glycerone-phosphate) with glyceraldehyde 3-phosphate (G3P) to produce tagatose 1,6-bisphosphate (TBP). Requires GatZ subunit for full activity and stability. Is involved in the catabolism of galactitol. This chain is D-tagatose-1,6-bisphosphate aldolase subunit GatY, found in Escherichia coli (strain K12 / MC4100 / BW2952).